A 497-amino-acid polypeptide reads, in one-letter code: Glutamyl-tRNA(Gln) amidotransferase subunit A (497 aa).

Active-site charge relay system residues include Lys-85 and Ser-160. Catalysis depends on Ser-184, which acts as the Acyl-ester intermediate.

It belongs to the amidase family. GatA subfamily. Heterotrimer of A, B and C subunits.

The enzyme catalyses L-glutamyl-tRNA(Gln) + L-glutamine + ATP + H2O = L-glutaminyl-tRNA(Gln) + L-glutamate + ADP + phosphate + H(+). Functionally, allows the formation of correctly charged Gln-tRNA(Gln) through the transamidation of misacylated Glu-tRNA(Gln) in organisms which lack glutaminyl-tRNA synthetase. The reaction takes place in the presence of glutamine and ATP through an activated gamma-phospho-Glu-tRNA(Gln). This Mycobacterium leprae (strain TN) protein is Glutamyl-tRNA(Gln) amidotransferase subunit A (gatA).